A 314-amino-acid polypeptide reads, in one-letter code: BCL2/adenovirus E1B 19 kDa protein-interacting protein 2 (314 aa).

The disordered stretch occupies residues 1 to 21 (MEGVELKEEWQDEDFPIPLPE). Acidic residues predominate over residues 10 to 21 (WQDEDFPIPLPE). A phosphoserine mark is found at S41 and S77. Residues 76–100 (ESGEIDLDGLDTPSENSNEFEWEDD) are disordered. Position 87 is a phosphothreonine (T87). A phosphoserine mark is found at S89, S92, and S114. The 158-residue stretch at 147–304 (IEPYKKVISH…CIKQVDQELN (158 aa)) folds into the CRAL-TRIO domain.

Its subcellular location is the cytoplasm. The protein resides in the perinuclear region. Functionally, implicated in the suppression of cell death. Interacts with the BCL-2 and adenovirus E1B 19 kDa proteins. The sequence is that of BCL2/adenovirus E1B 19 kDa protein-interacting protein 2 (BNIP2) from Homo sapiens (Human).